Reading from the N-terminus, the 353-residue chain is Photosystem II protein D1 (353 aa).

Thr2 carries the post-translational modification N-acetylthreonine. Thr2 carries the phosphothreonine modification. The next 3 membrane-spanning stretches (helical) occupy residues 29 to 46, 118 to 133, and 142 to 156; these read YIGW…TATS, HFLL…EWEL, and WIAV…AATA. Residue His118 participates in chlorophyll a binding. A pheophytin a-binding site is contributed by Tyr126. [CaMn4O5] cluster is bound by residues Asp170 and Glu189. The helical transmembrane segment at 197 to 218 threads the bilayer; the sequence is FHMLGVAGVFGGSLFSAMHGSL. His198 is a binding site for chlorophyll a. A quinone-binding positions include His215 and 264–265; that span reads SF. Residue His215 coordinates Fe cation. His272 provides a ligand contact to Fe cation. The helical transmembrane segment at 274–288 threads the bilayer; it reads FLAAWPVVGIWFTAL. Residues His332, Glu333, Asp342, and Ala344 each coordinate [CaMn4O5] cluster. Positions 345–353 are excised as a propeptide; that stretch reads AVEAPAVNG.

It belongs to the reaction center PufL/M/PsbA/D family. PSII is composed of 1 copy each of membrane proteins PsbA, PsbB, PsbC, PsbD, PsbE, PsbF, PsbH, PsbI, PsbJ, PsbK, PsbL, PsbM, PsbT, PsbX, PsbY, PsbZ, Psb30/Ycf12, at least 3 peripheral proteins of the oxygen-evolving complex and a large number of cofactors. It forms dimeric complexes. The D1/D2 heterodimer binds P680, chlorophylls that are the primary electron donor of PSII, and subsequent electron acceptors. It shares a non-heme iron and each subunit binds pheophytin, quinone, additional chlorophylls, carotenoids and lipids. D1 provides most of the ligands for the Mn4-Ca-O5 cluster of the oxygen-evolving complex (OEC). There is also a Cl(-1) ion associated with D1 and D2, which is required for oxygen evolution. The PSII complex binds additional chlorophylls, carotenoids and specific lipids. is required as a cofactor. In terms of processing, tyr-161 forms a radical intermediate that is referred to as redox-active TyrZ, YZ or Y-Z. Post-translationally, C-terminally processed by CTPA; processing is essential to allow assembly of the oxygen-evolving complex and thus photosynthetic growth.

The protein localises to the plastid. The protein resides in the chloroplast thylakoid membrane. It carries out the reaction 2 a plastoquinone + 4 hnu + 2 H2O = 2 a plastoquinol + O2. Its function is as follows. Photosystem II (PSII) is a light-driven water:plastoquinone oxidoreductase that uses light energy to abstract electrons from H(2)O, generating O(2) and a proton gradient subsequently used for ATP formation. It consists of a core antenna complex that captures photons, and an electron transfer chain that converts photonic excitation into a charge separation. The D1/D2 (PsbA/PsbD) reaction center heterodimer binds P680, the primary electron donor of PSII as well as several subsequent electron acceptors. In Conocephalum conicum (Snakeskin liverwort), this protein is Photosystem II protein D1.